The chain runs to 599 residues: MPEKLLKITYQGAGPQKKINAYLRMPSQNYTILRREIELYLFQERQLPKCDVRTFWIDADQDEIEIVNQNDYEIFLAKCESNMHVQVAPLAPIEEPKATKQEGSSANAEAPSVDDPSNFTIHDSVQCDGCGLAPLIGFRYKCVQCSNFDLCQKCESAHKHPEHLMLRMPTNNGPGMVDAWFTGPGLGRRCGRRSRGHCPFQEASQPAPAAEPARDSRRERRHARRHAGVLSQFVEMMTNLPLNTTTATAPAEPQKPKAAEQTESPPQAEPTVTAEKATESEAKPTEPMKVNTDQSVPTTEDPVTTPRSTEPTTPVINLDNLSQIVPPEYMRAGIEILNNFSEMFSKMIDTTDVGDSGIFAPSTTSSAENKKPEEQSQSSGQSAASSASQSAVPSAAPSANQSNVPSANQSATPSISGSISDAQLETEPLNPKPLETTTETEQDRRRSDSLDPEWQLIDNAYSANNSNLINLDTTNPTAAPQQPVRDFGQLGELLRQHMNEEARVEQASANTQTAQVDTVSTSTSTTSVTTNSVGTSPAAPDDKRTVPVYHTDERINQSIHAMMAMGFSNEGAWLTQLLESVQGNIPAALDVMHVSQTRN.

One can recognise a PB1 domain in the interval 3-88 (EKLLKITYQG…CESNMHVQVA (86 aa)). The ZZ-type zinc finger occupies 122 to 173 (HDSVQCDGCGLAPLIGFRYKCVQCSNFDLCQKCESAHKHPEHLMLRMPTNNG). Zn(2+) contacts are provided by cysteine 127, cysteine 130, cysteine 142, cysteine 145, cysteine 151, cysteine 154, histidine 160, and histidine 163. 4 disordered regions span residues 192–225 (RRSR…HARR), 245–319 (TTAT…INLD), 357–453 (GIFA…LDPE), and 507–544 (ASAN…DDKR). Residues 199–211 (PFQEASQPAPAAE) are compositionally biased toward low complexity. Basic and acidic residues predominate over residues 276–286 (KATESEAKPTE). Over residues 291–319 (NTDQSVPTTEDPVTTPRSTEPTTPVINLD) the composition is skewed to polar residues. Low complexity predominate over residues 375–411 (QSQSSGQSAASSASQSAVPSAAPSANQSNVPSANQSA). Tandem repeats lie at residues 386–393 (SASQSAVP), 399–406 (ANQSNVPS), and 407–413 (ANQSATP). The 3 X 8 AA repeats of S-A-N-Q-S-X-X-P stretch occupies residues 386 to 413 (SASQSAVPSAAPSANQSNVPSANQSATP). Positions 412–423 (TPSISGSISDAQ) are enriched in polar residues. A compositionally biased stretch (low complexity) spans 511–536 (TQTAQVDTVSTSTSTTSVTTNSVGTS). Residues 550–595 (HTDERINQSIHAMMAMGFSNEGAWLTQLLESVQGNIPAALDVMHVS) enclose the UBA domain.

As to quaternary structure, interacts with aPKC and Traf6.

The protein resides in the nucleus. The protein localises to the cytoplasm. Functionally, required for selective autophagy activation by ubiquitinated proteins. Implicated in sigma rhabdovirus multiplication and necessary for male fertility. Involved in activating transcription of Drs. The sequence is that of Protein ref(2)P (ref(2)P) from Drosophila simulans (Fruit fly).